The primary structure comprises 145 residues: MIKTILVVCIGNICRSPMAQALLRQSLPGVSVISAGIGALSGYPADPSAVEVMAHHGIDISEHRAQQLTGSLVSRADLILVMDGAQKQEIQSRHPAKTGSVFRLGEMEQFDIADPYRKQLTAFEEALEMIQRGVDAWVPRIRALG.

The Nucleophile role is filled by C9. The active site involves R15. The active-site Proton donor is D114.

The protein belongs to the low molecular weight phosphotyrosine protein phosphatase family.

The enzyme catalyses O-phospho-L-tyrosyl-[protein] + H2O = L-tyrosyl-[protein] + phosphate. Its pathway is glycan metabolism; exopolysaccharide biosynthesis. Functionally, may be involved in assembly or function of the EPS I polymerization/export complex and/or the EpsB ATPase. Alternatively it may function in the removal of the terminal phosphate from C55-isoprenyl pyrophosphate in order to recycle the C55-isoprenyl phosphate lipid carrier used in the synthesis of polysaccharide repeat units. The chain is Probable low molecular weight protein-tyrosine-phosphatase EpsP (epsP) from Ralstonia nicotianae (strain ATCC BAA-1114 / GMI1000) (Ralstonia solanacearum).